The chain runs to 262 residues: Glutamate racemase (262 aa).

Residues 10 to 11 and 42 to 43 each bind substrate; these read DS and FG. Cysteine 74 functions as the Proton donor/acceptor in the catalytic mechanism. Residue 75 to 76 coordinates substrate; sequence NT. Cysteine 189 (proton donor/acceptor) is an active-site residue. Position 190–191 (190–191) interacts with substrate; the sequence is TH.

It belongs to the aspartate/glutamate racemases family.

It carries out the reaction L-glutamate = D-glutamate. Its pathway is cell wall biogenesis; peptidoglycan biosynthesis. Its function is as follows. Provides the (R)-glutamate required for cell wall biosynthesis. This chain is Glutamate racemase, found in Mesorhizobium japonicum (strain LMG 29417 / CECT 9101 / MAFF 303099) (Mesorhizobium loti (strain MAFF 303099)).